A 624-amino-acid polypeptide reads, in one-letter code: ABC transporter G family member 23 (624 aa).

An ABC transporter domain is found at L52–E296. G84–S91 contacts ATP. The region spanning T350–Y560 is the ABC transmembrane type-2 domain. Helical transmembrane passes span L369 to T389, L402 to I422, I450 to I470, F480 to F500, G511 to P531, and I595 to L615.

This sequence belongs to the ABC transporter superfamily. ABCG family. Eye pigment precursor importer (TC 3.A.1.204) subfamily.

It is found in the membrane. This chain is ABC transporter G family member 23 (ABCG23), found in Arabidopsis thaliana (Mouse-ear cress).